Here is a 100-residue protein sequence, read N- to C-terminus: Large ribosomal subunit protein uL23 (100 aa).

This sequence belongs to the universal ribosomal protein uL23 family. Part of the 50S ribosomal subunit. Contacts protein L29, and trigger factor when it is bound to the ribosome.

In terms of biological role, one of the early assembly proteins it binds 23S rRNA. One of the proteins that surrounds the polypeptide exit tunnel on the outside of the ribosome. Forms the main docking site for trigger factor binding to the ribosome. The sequence is that of Large ribosomal subunit protein uL23 from Shigella dysenteriae serotype 1 (strain Sd197).